The following is a 426-amino-acid chain: Histidine--tRNA ligase (426 aa).

Belongs to the class-II aminoacyl-tRNA synthetase family. Homodimer.

Its subcellular location is the cytoplasm. The enzyme catalyses tRNA(His) + L-histidine + ATP = L-histidyl-tRNA(His) + AMP + diphosphate + H(+). In Shewanella baltica (strain OS195), this protein is Histidine--tRNA ligase.